Here is a 766-residue protein sequence, read N- to C-terminus: Leucine-rich repeat and fibronectin type III domain-containing protein 1 (766 aa).

The N-terminal stretch at 1-31 (MAPGPFSSGLFSPPPAALPFLLLLWAGASRG) is a signal peptide. Residues 32-65 (QPCPGRCICQNVAPTLTMLCAKTGLLFVPPAIDR) form the LRRNT domain. Over 32–536 (QPCPGRCICQ…LRAHFLGGTM (505 aa)) the chain is Extracellular. LRR repeat units follow at residues 66–87 (RVVE…DFAN), 90–111 (SLVH…AFAD), 114–135 (ALRA…QLRG), 138–159 (NLRH…AFDA), 163–184 (TVED…AVGQ), 187–208 (NLNT…TFVQ), and 211–232 (KLVR…GLFL). Residue asparagine 87 is glycosylated (N-linked (GlcNAc...) asparagine). Positions 252–298 (NPLHCNCELLWLRRLTREDDLETCATPEHLTDRYFWSIPEEEFLCEP) constitute an LRRCT domain. The region spanning 299–386 (PLITRQAGGR…GEATAPVEVC (88 aa)) is the Ig-like domain. A disulfide bond links cysteine 321 and cysteine 370. A glycan (N-linked (GlcNAc...) asparagine) is linked at asparagine 343. The segment at 397-424 (PAAPPPLTEPGSSDIATPGRPGANDSTS) is disordered. The Fibronectin type-III domain maps to 424 to 520 (SERRLVAAEL…GCVQFTTAGD (97 aa)). A helical membrane pass occupies residues 537–557 (IIAIGGVIVASVLVFIVLLMI). Residues 558-766 (RYKVYGDGDS…STEWMLESTV (209 aa)) lie on the Cytoplasmic side of the membrane. 2 disordered regions span residues 568 to 601 (RRIK…PPAP) and 645 to 742 (LCLL…GEDG). A Phosphoserine modification is found at serine 713. A compositionally biased stretch (basic residues) spans 714-727 (YPRRARRTKRHRST). The PDZ-binding motif lies at 763–766 (ESTV).

The protein belongs to the LRFN family. Can form heteromeric complexes with LRFN2, LRFN3, LRFN4 and LRFN5. Forms homomeric complexes, but not across cell junctions. Interacts with DLG4. Also interacts with DLG1, DLG2, and DLG3. Interacts with 2 AMPA receptor subunits GRIA1 and GRIA2 and NMDA receptor subunit GRIN1. Post-translationally, glycosylated. Predominantly expressed in the brain, with a weak, but broad expression in the cerebral cortex and diencephalic nuclei. Also detected in other parts of the central nervous system, including the olfactory bulb, pons, cerebellum, and medulla oblongata, as well as in the peripheral nervous system, such as the ganglia of cranial nerves and the dorsal root ganglion during gestation.

The protein resides in the membrane. The protein localises to the synapse. It is found in the postsynaptic density membrane. Promotes neurite outgrowth in hippocampal neurons. Involved in the regulation and maintenance of excitatory synapses. Induces the clustering of excitatory postsynaptic proteins, including DLG4, DLGAP1, GRIA1 and GRIN1. This Mus musculus (Mouse) protein is Leucine-rich repeat and fibronectin type III domain-containing protein 1 (Lrfn1).